A 562-amino-acid chain; its full sequence is NAD-dependent malic enzyme (562 aa).

The active-site Proton donor is the Y101. An NAD(+)-binding site is contributed by R154. The Proton acceptor role is filled by K172. Residues E243, D244, and D267 each contribute to the a divalent metal cation site. NAD(+)-binding residues include D267 and N415.

This sequence belongs to the malic enzymes family. In terms of assembly, homotetramer. It depends on Mg(2+) as a cofactor. Mn(2+) serves as cofactor.

The catalysed reaction is (S)-malate + NAD(+) = pyruvate + CO2 + NADH. It catalyses the reaction oxaloacetate + H(+) = pyruvate + CO2. This Shewanella putrefaciens (strain CN-32 / ATCC BAA-453) protein is NAD-dependent malic enzyme.